The chain runs to 90 residues: MAVKIRLKRMGAKKSPFYRIVVADSRSPRDGRFIETVGTYNPLAKPAEVKIDEELALKWLQTGAKPSDTVRNLFSKEGIMEKFHNAKQSK.

Belongs to the bacterial ribosomal protein bS16 family.

This is Small ribosomal subunit protein bS16 from Bacillus licheniformis (strain ATCC 14580 / DSM 13 / JCM 2505 / CCUG 7422 / NBRC 12200 / NCIMB 9375 / NCTC 10341 / NRRL NRS-1264 / Gibson 46).